The chain runs to 218 residues: Large ribosomal subunit protein uL3 (218 aa).

The interval 124-162 is disordered; it reads KRHGFSRGPMTHGSKNHREPGSTGAGTTPGRIYPGKRMA.

It belongs to the universal ribosomal protein uL3 family. In terms of assembly, part of the 50S ribosomal subunit. Forms a cluster with proteins L14 and L19.

Functionally, one of the primary rRNA binding proteins, it binds directly near the 3'-end of the 23S rRNA, where it nucleates assembly of the 50S subunit. This Synechococcus sp. (strain CC9605) protein is Large ribosomal subunit protein uL3.